A 270-amino-acid chain; its full sequence is S-adenosylmethionine decarboxylase proenzyme (270 aa).

Catalysis depends on Ser120, which acts as the Schiff-base intermediate with substrate; via pyruvic acid. Pyruvic acid (Ser); by autocatalysis is present on Ser120. The active-site Proton acceptor; for processing activity is the His125. Cys148 serves as the catalytic Proton donor; for catalytic activity.

The protein belongs to the prokaryotic AdoMetDC family. Type 2 subfamily. In terms of assembly, heterooctamer of four alpha and four beta chains arranged as a tetramer of alpha/beta heterodimers. It depends on pyruvate as a cofactor. Is synthesized initially as an inactive proenzyme. Formation of the active enzyme involves a self-maturation process in which the active site pyruvoyl group is generated from an internal serine residue via an autocatalytic post-translational modification. Two non-identical subunits are generated from the proenzyme in this reaction, and the pyruvate is formed at the N-terminus of the alpha chain, which is derived from the carboxyl end of the proenzyme. The post-translation cleavage follows an unusual pathway, termed non-hydrolytic serinolysis, in which the side chain hydroxyl group of the serine supplies its oxygen atom to form the C-terminus of the beta chain, while the remainder of the serine residue undergoes an oxidative deamination to produce ammonia and the pyruvoyl group blocking the N-terminus of the alpha chain.

The catalysed reaction is S-adenosyl-L-methionine + H(+) = S-adenosyl 3-(methylsulfanyl)propylamine + CO2. It participates in amine and polyamine biosynthesis; S-adenosylmethioninamine biosynthesis; S-adenosylmethioninamine from S-adenosyl-L-methionine: step 1/1. Functionally, catalyzes the decarboxylation of S-adenosylmethionine to S-adenosylmethioninamine (dcAdoMet), the propylamine donor required for the synthesis of the polyamines spermine and spermidine from the diamine putrescine. The sequence is that of S-adenosylmethionine decarboxylase proenzyme from Alkaliphilus oremlandii (strain OhILAs) (Clostridium oremlandii (strain OhILAs)).